The sequence spans 37 residues: Chitinase-like protein (37 aa).

The tract at residues 1-20 (VLLSVGGDADTESPEKKNLG) is disordered. Residues 1 to 37 (VLLSVGGDADTESPEKKNLGGVSIVDLSMDDFRGLLT) enclose the GH18 domain.

The protein belongs to the glycosyl hydrolase 18 family. IDGF subfamily. Post-translationally, glycosylated.

It localises to the secreted. Its function is as follows. Cooperates with insulin-like peptides to stimulate the proliferation, polarization and motility of imaginal disk cells. May act by stabilizing the binding of insulin-like peptides to its receptor through a simultaneous interaction with both molecules to form a multiprotein signaling complex. The protein is Chitinase-like protein of Heliothis virescens (Tobacco budworm moth).